A 102-amino-acid polypeptide reads, in one-letter code: MSAPLRIRENGIDLFVRLTPKSSLDRLEGVETSADGRSHLKARVRAVPENGAANQALERLVAKTLGVPASSVSVVAGGTSRLKTVRIVGDPEALAQRVEALG.

The protein belongs to the UPF0235 family.

This chain is UPF0235 protein msl4154, found in Mesorhizobium japonicum (strain LMG 29417 / CECT 9101 / MAFF 303099) (Mesorhizobium loti (strain MAFF 303099)).